Consider the following 609-residue polypeptide: Autophagy-related protein 22-1 (609 aa).

A run of 4 helical transmembrane segments spans residues 35–55 (YGWA…PITL), 117–137 (TASF…ILII), 151–171 (LLLM…LGVV), and 176–196 (MVGA…FVLL). The span at 214–231 (AREPRPALDDSRAQEGHS) shows a compositional bias: basic and acidic residues. The disordered stretch occupies residues 214-240 (AREPRPALDDSRAQEGHSDTTNGIEHG). The N-linked (GlcNAc...) asparagine glycan is linked to Asn244. Residues 287–307 (IGIGYIGAIILQIVCILVVIA) traverse the membrane as a helical segment. N-linked (GlcNAc...) asparagine glycosylation is present at Asn309. 3 helical membrane passes run 317 to 337 (LVLF…ALWL), 381 to 401 (ILLF…VSGT), and 415 to 435 (AALG…AFSW). Asn443 carries an N-linked (GlcNAc...) asparagine glycan. The next 4 helical transmembrane spans lie at 450–470 (IIAC…GFIP), 477–497 (FLGL…GLVM), 522–542 (ALYA…VGII), and 552–572 (AFVF…LVDV).

The protein belongs to the ATG22 family.

It is found in the vacuole membrane. Vacuolar effluxer which mediate the efflux of amino acids resulting from autophagic degradation. The release of autophagic amino acids allows the maintenance of protein synthesis and viability during nitrogen starvation. This chain is Autophagy-related protein 22-1 (atg22-1), found in Aspergillus fumigatus (strain ATCC MYA-4609 / CBS 101355 / FGSC A1100 / Af293) (Neosartorya fumigata).